Reading from the N-terminus, the 745-residue chain is Probable xyloglucan glycosyltransferase 3 (745 aa).

2 helical membrane-spanning segments follow: residues 116–136 (GFLL…LKGW) and 196–216 (IDYI…LFMV). The active site involves Asp-300. Substrate contacts are provided by Asp-359 and Asp-361. Asp-453 is an active-site residue. 4 helical membrane passes run 531–551 (LILP…TMFV), 556–576 (LPIW…ILPA), 695–715 (IFKK…RSLL), and 720–740 (LHFY…LDLI).

The protein belongs to the glycosyltransferase 2 family. Plant cellulose synthase-like C subfamily.

It localises to the golgi apparatus membrane. In terms of biological role, probable beta-1,4-glucan synthase rather involved in the synthesis of the xyloglucan backbone than cellulose. Seems to work simultaneously with xyloglucan 6-xylosyltransferase. Xyloglucan is a noncellulosic polysaccharides of plant cell wall and consists of a glucan backbone substituted by xylose, galactose and fucose. This is Probable xyloglucan glycosyltransferase 3 (CSLC3) from Oryza sativa subsp. japonica (Rice).